Reading from the N-terminus, the 553-residue chain is Efflux pump alnA (553 aa).

Over residues 1 to 21 (MSSDDTVKQEHSCSADSEKQD) the composition is skewed to basic and acidic residues. The disordered stretch occupies residues 1–36 (MSSDDTVKQEHSCSADSEKQDSSCASDNEQPKEPQS). A run of 13 helical transmembrane segments spans residues 40-60 (IHGL…FLFA), 85-105 (WSGV…LQIF), 110-130 (IKWM…ICGA), 136-156 (MLIG…VGVM), 174-194 (AMGL…GAFT), 202-222 (WSFY…IFLL), 243-263 (LVGT…INFA), 270-290 (SEPG…VFGI), 319-339 (LLFV…YVIP), 355-375 (VRLL…GYLA), 382-402 (IPWY…MYTI), 413-433 (GYSS…HAVA), and 522-542 (TYIL…GMKW).

The protein belongs to the major facilitator superfamily. TCR/Tet family.

Its subcellular location is the cell membrane. In terms of biological role, efflux pump; part of the gene cluster that mediates the biosynthesis of asperlin, a polyketide showing anti-inflammatory, antitumor and antibiotic activities. Is probably involved in the efflux of asperlin. The polypeptide is Efflux pump alnA (Emericella nidulans (strain FGSC A4 / ATCC 38163 / CBS 112.46 / NRRL 194 / M139) (Aspergillus nidulans)).